Consider the following 339-residue polypeptide: MO25-like protein 3 (339 aa).

It belongs to the Mo25 family.

The chain is MO25-like protein 3 (mop-25.3) from Caenorhabditis elegans.